We begin with the raw amino-acid sequence, 346 residues long: Holliday junction branch migration complex subunit RuvB (346 aa).

The segment at 1-188 (MSDEYGPPER…FGIVQRLAYY (188 aa)) is large ATPase domain (RuvB-L). Residues L27, R28, G69, K72, T73, T74, 135 to 137 (EDF), R178, Y188, and R225 each bind ATP. T73 lines the Mg(2+) pocket. A small ATPAse domain (RuvB-S) region spans residues 189 to 259 (PVDELTRIVQ…VAADAMELLD (71 aa)). Residues 262 to 346 (RNGLDEQDRR…QAAGSGDLFG (85 aa)) form a head domain (RuvB-H) region. The DNA site is built by R298, R317, and R322.

Belongs to the RuvB family. In terms of assembly, homohexamer. Forms an RuvA(8)-RuvB(12)-Holliday junction (HJ) complex. HJ DNA is sandwiched between 2 RuvA tetramers; dsDNA enters through RuvA and exits via RuvB. An RuvB hexamer assembles on each DNA strand where it exits the tetramer. Each RuvB hexamer is contacted by two RuvA subunits (via domain III) on 2 adjacent RuvB subunits; this complex drives branch migration. In the full resolvosome a probable DNA-RuvA(4)-RuvB(12)-RuvC(2) complex forms which resolves the HJ.

Its subcellular location is the cytoplasm. It carries out the reaction ATP + H2O = ADP + phosphate + H(+). In terms of biological role, the RuvA-RuvB-RuvC complex processes Holliday junction (HJ) DNA during genetic recombination and DNA repair, while the RuvA-RuvB complex plays an important role in the rescue of blocked DNA replication forks via replication fork reversal (RFR). RuvA specifically binds to HJ cruciform DNA, conferring on it an open structure. The RuvB hexamer acts as an ATP-dependent pump, pulling dsDNA into and through the RuvAB complex. RuvB forms 2 homohexamers on either side of HJ DNA bound by 1 or 2 RuvA tetramers; 4 subunits per hexamer contact DNA at a time. Coordinated motions by a converter formed by DNA-disengaged RuvB subunits stimulates ATP hydrolysis and nucleotide exchange. Immobilization of the converter enables RuvB to convert the ATP-contained energy into a lever motion, pulling 2 nucleotides of DNA out of the RuvA tetramer per ATP hydrolyzed, thus driving DNA branch migration. The RuvB motors rotate together with the DNA substrate, which together with the progressing nucleotide cycle form the mechanistic basis for DNA recombination by continuous HJ branch migration. Branch migration allows RuvC to scan DNA until it finds its consensus sequence, where it cleaves and resolves cruciform DNA. The sequence is that of Holliday junction branch migration complex subunit RuvB from Halorhodospira halophila (strain DSM 244 / SL1) (Ectothiorhodospira halophila (strain DSM 244 / SL1)).